A 374-amino-acid chain; its full sequence is Coiled-coil domain-containing protein 89 (374 aa).

A disordered region spans residues methionine 1–lysine 40. The residue at position 16 (threonine 16) is a Phosphothreonine. Residues proline 19–asparagine 32 are compositionally biased toward basic and acidic residues. Positions glutamate 20–phenylalanine 351 form a coiled coil.

This sequence belongs to the CCDC89 family. Interacts with HEY1.

It localises to the cytoplasm. It is found in the nucleus. The chain is Coiled-coil domain-containing protein 89 (CCDC89) from Homo sapiens (Human).